The primary structure comprises 360 residues: Phosphoserine aminotransferase (360 aa).

R42 serves as a coordination point for L-glutamate. Residues 76–77 (AS), W102, T152, D172, and Q195 each bind pyridoxal 5'-phosphate. K196 carries the N6-(pyridoxal phosphate)lysine modification. Residue 237-238 (NT) coordinates pyridoxal 5'-phosphate.

It belongs to the class-V pyridoxal-phosphate-dependent aminotransferase family. SerC subfamily. In terms of assembly, homodimer. The cofactor is pyridoxal 5'-phosphate.

It is found in the cytoplasm. The enzyme catalyses O-phospho-L-serine + 2-oxoglutarate = 3-phosphooxypyruvate + L-glutamate. It catalyses the reaction 4-(phosphooxy)-L-threonine + 2-oxoglutarate = (R)-3-hydroxy-2-oxo-4-phosphooxybutanoate + L-glutamate. The protein operates within amino-acid biosynthesis; L-serine biosynthesis; L-serine from 3-phospho-D-glycerate: step 2/3. In terms of biological role, catalyzes the reversible conversion of 3-phosphohydroxypyruvate to phosphoserine and of 3-hydroxy-2-oxo-4-phosphonooxybutanoate to phosphohydroxythreonine. The polypeptide is Phosphoserine aminotransferase (Bacillus cereus (strain ATCC 14579 / DSM 31 / CCUG 7414 / JCM 2152 / NBRC 15305 / NCIMB 9373 / NCTC 2599 / NRRL B-3711)).